A 208-amino-acid chain; its full sequence is Imidazole glycerol phosphate synthase subunit HisH (208 aa).

Positions 1 to 206 (MIVIIDYDTG…KEVTYSCKSS (206 aa)) constitute a Glutamine amidotransferase type-1 domain. Cys-79 serves as the catalytic Nucleophile. Catalysis depends on residues His-181 and Glu-183.

In terms of assembly, heterodimer of HisH and HisF.

Its subcellular location is the cytoplasm. The catalysed reaction is 5-[(5-phospho-1-deoxy-D-ribulos-1-ylimino)methylamino]-1-(5-phospho-beta-D-ribosyl)imidazole-4-carboxamide + L-glutamine = D-erythro-1-(imidazol-4-yl)glycerol 3-phosphate + 5-amino-1-(5-phospho-beta-D-ribosyl)imidazole-4-carboxamide + L-glutamate + H(+). It catalyses the reaction L-glutamine + H2O = L-glutamate + NH4(+). It participates in amino-acid biosynthesis; L-histidine biosynthesis; L-histidine from 5-phospho-alpha-D-ribose 1-diphosphate: step 5/9. In terms of biological role, IGPS catalyzes the conversion of PRFAR and glutamine to IGP, AICAR and glutamate. The HisH subunit catalyzes the hydrolysis of glutamine to glutamate and ammonia as part of the synthesis of IGP and AICAR. The resulting ammonia molecule is channeled to the active site of HisF. This chain is Imidazole glycerol phosphate synthase subunit HisH, found in Listeria monocytogenes serovar 1/2a (strain ATCC BAA-679 / EGD-e).